A 327-amino-acid chain; its full sequence is Phenylalanine--tRNA ligase alpha subunit (327 aa).

E252 contacts Mg(2+).

The protein belongs to the class-II aminoacyl-tRNA synthetase family. Phe-tRNA synthetase alpha subunit type 1 subfamily. Tetramer of two alpha and two beta subunits. Mg(2+) serves as cofactor.

The protein localises to the cytoplasm. It catalyses the reaction tRNA(Phe) + L-phenylalanine + ATP = L-phenylalanyl-tRNA(Phe) + AMP + diphosphate + H(+). The protein is Phenylalanine--tRNA ligase alpha subunit of Shewanella sp. (strain MR-7).